The sequence spans 411 residues: MLKGIEEISATKKRLKIEIPADIVEGEIQKALKEIQKKAKIPGFRPGKAPISIIEKKFGKEAEADVLEKLVSESYQKAVKETKIKPLLPPMAEDAIDIKRNEPLSFELVVEVRPDIENLNYDNIEVEEISTEVKEEEIEEVLQRLSKERGTYEPTEEPAMSEDLVVIDYTTDIGKEAKDYIYKLGAGPFPEDFSKAIEGKKKDETFSVTIDFPEDSIADFAGKKVNFEITIKEVKRRQNIPLEELHKELGFEDSDSLKKYIRQSLENAKKEQALEKQKFDILKKLLETYDFELPEGLVEMEMKRITEEYESLGLDITQHMDKISERAKRNVKAYILIDLIGEKEGVSVSEEELKQEIMNIARRYSITPQGVVQYYMSRDGSLEALQNSVFERKVFDILLQKSNRIKKEEAV.

The PPIase FKBP-type domain maps to 162–240 (EDLVVIDYTT…IKEVKRRQNI (79 aa)).

This sequence belongs to the FKBP-type PPIase family. Tig subfamily.

The protein localises to the cytoplasm. It carries out the reaction [protein]-peptidylproline (omega=180) = [protein]-peptidylproline (omega=0). Its function is as follows. Involved in protein export. Acts as a chaperone by maintaining the newly synthesized protein in an open conformation. Functions as a peptidyl-prolyl cis-trans isomerase. This Thermodesulfovibrio yellowstonii (strain ATCC 51303 / DSM 11347 / YP87) protein is Trigger factor.